A 65-amino-acid polypeptide reads, in one-letter code: DNA gyrase inhibitor YacG (65 aa).

Zn(2+) is bound by residues Cys-9, Cys-12, Cys-28, and Cys-32. The interval 43–65 (EEKRIPSQSENSDSDDWSGQPEQ) is disordered.

This sequence belongs to the DNA gyrase inhibitor YacG family. In terms of assembly, interacts with GyrB. Zn(2+) is required as a cofactor.

Its function is as follows. Inhibits all the catalytic activities of DNA gyrase by preventing its interaction with DNA. Acts by binding directly to the C-terminal domain of GyrB, which probably disrupts DNA binding by the gyrase. The sequence is that of DNA gyrase inhibitor YacG from Photorhabdus laumondii subsp. laumondii (strain DSM 15139 / CIP 105565 / TT01) (Photorhabdus luminescens subsp. laumondii).